Reading from the N-terminus, the 60-residue chain is Large ribosomal subunit protein bL32 (60 aa).

It belongs to the bacterial ribosomal protein bL32 family.

This is Large ribosomal subunit protein bL32 from Streptococcus sanguinis (strain SK36).